The primary structure comprises 241 residues: Cobalt transport protein CbiM (241 aa).

An N-terminal signal peptide occupies residues 1-23 (MKKNLTFFMVIALLFTITPNVYA). The next 6 helical transmembrane spans lie at 29–49 (GFLPPMWSGVYFVISAPFIII), 66–86 (MLLGLVAAYAFILSAMKIPSV), 98–118 (LSAIIFGPFISAIVGLIVLIF), 121–141 (ILLAHGGITTLGANTLSMGIM), 160–180 (VAVFLAATLGDLFTYFITSVQ), and 202–222 (IFSITQIPLAIMEGILTVIIF).

It belongs to the CbiM family. In terms of assembly, forms an energy-coupling factor (ECF) transporter complex composed of an ATP-binding protein (A component, CbiO), a transmembrane protein (T component, CbiQ) and 2 possible substrate-capture proteins (S components, CbiM and CbiN) of unknown stoichimetry.

Its subcellular location is the cell membrane. It functions in the pathway cofactor biosynthesis; adenosylcobalamin biosynthesis. In terms of biological role, part of the energy-coupling factor (ECF) transporter complex CbiMNOQ involved in cobalt import. The sequence is that of Cobalt transport protein CbiM from Clostridium tetani (strain Massachusetts / E88).